Here is a 334-residue protein sequence, read N- to C-terminus: Ferrochelatase 1 (334 aa).

Fe cation contacts are provided by His-201 and Glu-282.

This sequence belongs to the ferrochelatase family.

The protein localises to the cytoplasm. The enzyme catalyses heme b + 2 H(+) = protoporphyrin IX + Fe(2+). It functions in the pathway porphyrin-containing compound metabolism; protoheme biosynthesis; protoheme from protoporphyrin-IX: step 1/1. Functionally, catalyzes the ferrous insertion into protoporphyrin IX. This chain is Ferrochelatase 1, found in Shewanella oneidensis (strain ATCC 700550 / JCM 31522 / CIP 106686 / LMG 19005 / NCIMB 14063 / MR-1).